The sequence spans 176 residues: Endothelin-2 (176 aa).

Positions 1–22 (MVSPAWCSIALALLLALHEGKG) are cleaved as a signal peptide. Positions 23–44 (QAAATMEQPASAPKGRGPHLRF) are excised as a propeptide. Intrachain disulfides connect Cys-47–Cys-61 and Cys-49–Cys-57. A propeptide spanning residues 68–176 (VNTAGQTAPY…IPAHSRRRKR (109 aa)) is cleaved from the precursor. An endothelin-like region spans residues 94–109 (CECSSAGDSACATFCH).

The protein belongs to the endothelin/sarafotoxin family.

The protein localises to the secreted. Functionally, vasoconstrictor. This chain is Endothelin-2 (Edn2), found in Rattus norvegicus (Rat).